Consider the following 476-residue polypeptide: Membrane-bound lytic murein transglycosylase F (476 aa).

An N-terminal signal peptide occupies residues 1 to 22 (MTRFLFALILGFLLTACQQVTV). Residues 23–257 (DETEFVPKKL…HLNEKYFGHV (235 aa)) form a non-LT domain region. The LT domain stretch occupies residues 258-476 (KRFDYVDTRA…AGTLSPEQPK (219 aa)). Glutamate 302 is a catalytic residue. Residues 446–476 (SKQQNPEEEPSDLASEEPAIPAGTLSPEQPK) are disordered. The span at 451–460 (PEEEPSDLAS) shows a compositional bias: acidic residues.

It in the N-terminal section; belongs to the bacterial solute-binding protein 3 family. This sequence in the C-terminal section; belongs to the transglycosylase Slt family.

The protein resides in the cell outer membrane. The enzyme catalyses Exolytic cleavage of the (1-&gt;4)-beta-glycosidic linkage between N-acetylmuramic acid (MurNAc) and N-acetylglucosamine (GlcNAc) residues in peptidoglycan, from either the reducing or the non-reducing ends of the peptidoglycan chains, with concomitant formation of a 1,6-anhydrobond in the MurNAc residue.. Its function is as follows. Murein-degrading enzyme that degrades murein glycan strands and insoluble, high-molecular weight murein sacculi, with the concomitant formation of a 1,6-anhydromuramoyl product. Lytic transglycosylases (LTs) play an integral role in the metabolism of the peptidoglycan (PG) sacculus. Their lytic action creates space within the PG sacculus to allow for its expansion as well as for the insertion of various structures such as secretion systems and flagella. This is Membrane-bound lytic murein transglycosylase F from Shewanella baltica (strain OS155 / ATCC BAA-1091).